The chain runs to 301 residues: Sulfate adenylyltransferase subunit 2 (301 aa).

Belongs to the PAPS reductase family. CysD subfamily. Heterodimer composed of CysD, the smaller subunit, and CysN.

The enzyme catalyses sulfate + ATP + H(+) = adenosine 5'-phosphosulfate + diphosphate. It functions in the pathway sulfur metabolism; hydrogen sulfide biosynthesis; sulfite from sulfate: step 1/3. With CysN forms the ATP sulfurylase (ATPS) that catalyzes the adenylation of sulfate producing adenosine 5'-phosphosulfate (APS) and diphosphate, the first enzymatic step in sulfur assimilation pathway. APS synthesis involves the formation of a high-energy phosphoric-sulfuric acid anhydride bond driven by GTP hydrolysis by CysN coupled to ATP hydrolysis by CysD. The polypeptide is Sulfate adenylyltransferase subunit 2 (Geotalea daltonii (strain DSM 22248 / JCM 15807 / FRC-32) (Geobacter daltonii)).